Here is a 416-residue protein sequence, read N- to C-terminus: Phosphoglycerate kinase (416 aa).

14 residues coordinate (2R)-3-phosphoglycerate: valine 23, aspartate 24, phenylalanine 25, asparagine 26, glutamine 39, arginine 40, serine 63, histidine 64, glycine 66, arginine 67, leucine 122, arginine 123, histidine 170, and arginine 171. Glycine 214 contributes to the ADP binding site. Glycine 214 lines the CDP pocket. AMP-binding residues include alanine 215 and lysine 216. An ATP-binding site is contributed by alanine 215. Alanine 215 contributes to the Mg(2+) binding site. Aspartate 219 serves as a coordination point for CDP. Residue aspartate 219 participates in Mg(2+) binding. Residue lysine 220 participates in AMP binding. ATP is bound at residue lysine 220. Position 238 (glycine 238) interacts with ADP. Residue glycine 238 participates in CDP binding. AMP is bound by residues glycine 239 and glycine 312. 2 residues coordinate ATP: glycine 239 and glycine 312. Positions 337, 339, and 342 each coordinate CDP. Phenylalanine 342 contributes to the ADP binding site. Glutamate 343 provides a ligand contact to AMP. ATP-binding residues include glutamate 343, aspartate 374, and threonine 375. Position 374 (aspartate 374) interacts with Mg(2+).

The protein belongs to the phosphoglycerate kinase family. Monomer. Mg(2+) serves as cofactor.

Its subcellular location is the cytoplasm. The protein resides in the mitochondrion. The enzyme catalyses (2R)-3-phosphoglycerate + ATP = (2R)-3-phospho-glyceroyl phosphate + ADP. It participates in carbohydrate degradation; glycolysis; pyruvate from D-glyceraldehyde 3-phosphate: step 2/5. Functionally, catalyzes one of the two ATP producing reactions in the glycolytic pathway via the reversible conversion of 1,3-diphosphoglycerate to 3-phosphoglycerate. Both L- and D- forms of purine and pyrimidine nucleotides can be used as substrates, but the activity is much lower on pyrimidines. Negatively regulates the biosynthesis of acetyl-CoA from pyruvate in the mitochondrion. The sequence is that of Phosphoglycerate kinase (pgk1) from Hypocrea jecorina (Trichoderma reesei).